We begin with the raw amino-acid sequence, 386 residues long: Vesicle-associated protein 2-2 (386 aa).

Position 1 is an N-acetylmethionine (methionine 1). Residues 1–363 are Cytoplasmic-facing; it reads MNMPLLDIQP…TKKIVKEVHN (363 aa). The MSP domain maps to 5–125; that stretch reads LLDIQPRTLQ…EENKLRVTLV (121 aa). Serine 279 bears the Phosphoserine mark. Residues 300-353 adopt a coiled-coil conformation; sequence ELKLVKDIEEMKLKVDALESKLKQADSTISKLMEERSISSQHRQSLQHELAELR. A helical; Anchor for type IV membrane protein transmembrane segment spans residues 364 to 384; that stretch reads GFPLLYVCVVAFIAYVIGHFL.

Belongs to the VAMP-associated protein (VAP) (TC 9.B.17) family. Interacts with cowpea mosaic virus (CPMV) NTP-binding protein (NTB).

It is found in the endoplasmic reticulum membrane. Its function is as follows. May play a role in vesicle trafficking. The sequence is that of Vesicle-associated protein 2-2 (PVA22) from Arabidopsis thaliana (Mouse-ear cress).